We begin with the raw amino-acid sequence, 491 residues long: Glutamyl-tRNA(Gln) amidotransferase subunit A (491 aa).

Active-site charge relay system residues include lysine 79 and serine 154. Serine 178 functions as the Acyl-ester intermediate in the catalytic mechanism.

The protein belongs to the amidase family. GatA subfamily. As to quaternary structure, heterotrimer of A, B and C subunits.

The catalysed reaction is L-glutamyl-tRNA(Gln) + L-glutamine + ATP + H2O = L-glutaminyl-tRNA(Gln) + L-glutamate + ADP + phosphate + H(+). Functionally, allows the formation of correctly charged Gln-tRNA(Gln) through the transamidation of misacylated Glu-tRNA(Gln) in organisms which lack glutaminyl-tRNA synthetase. The reaction takes place in the presence of glutamine and ATP through an activated gamma-phospho-Glu-tRNA(Gln). The protein is Glutamyl-tRNA(Gln) amidotransferase subunit A of Natranaerobius thermophilus (strain ATCC BAA-1301 / DSM 18059 / JW/NM-WN-LF).